We begin with the raw amino-acid sequence, 124 residues long: Small ribosomal subunit protein uS12 (124 aa).

At Asp-89 the chain carries 3-methylthioaspartic acid.

The protein belongs to the universal ribosomal protein uS12 family. In terms of assembly, part of the 30S ribosomal subunit. Contacts proteins S8 and S17. May interact with IF1 in the 30S initiation complex.

With S4 and S5 plays an important role in translational accuracy. Functionally, interacts with and stabilizes bases of the 16S rRNA that are involved in tRNA selection in the A site and with the mRNA backbone. Located at the interface of the 30S and 50S subunits, it traverses the body of the 30S subunit contacting proteins on the other side and probably holding the rRNA structure together. The combined cluster of proteins S8, S12 and S17 appears to hold together the shoulder and platform of the 30S subunit. The sequence is that of Small ribosomal subunit protein uS12 from Proteus mirabilis (strain HI4320).